We begin with the raw amino-acid sequence, 489 residues long: Probable cytochrome P450 522A1 (489 aa).

The chain crosses the membrane as a helical span at residues Met-1–Asn-21. Heme is bound at residue Cys-433.

Belongs to the cytochrome P450 family. Heme is required as a cofactor.

It localises to the membrane. This is Probable cytochrome P450 522A1 (cyp522A1) from Dictyostelium discoideum (Social amoeba).